A 379-amino-acid chain; its full sequence is Queuine tRNA-ribosyltransferase (379 aa).

Aspartate 95 serves as the catalytic Proton acceptor. Substrate is bound by residues 95–99 (DSGGF), aspartate 149, glutamine 197, and glycine 224. Residues 255–261 (GVGMPAE) form an RNA binding region. Aspartate 274 functions as the Nucleophile in the catalytic mechanism. Cysteine 312, cysteine 314, cysteine 317, and histidine 343 together coordinate Zn(2+).

The protein belongs to the queuine tRNA-ribosyltransferase family. As to quaternary structure, homodimer. Within each dimer, one monomer is responsible for RNA recognition and catalysis, while the other monomer binds to the replacement base PreQ1. Requires Zn(2+) as cofactor.

The catalysed reaction is 7-aminomethyl-7-carbaguanine + guanosine(34) in tRNA = 7-aminomethyl-7-carbaguanosine(34) in tRNA + guanine. Its pathway is tRNA modification; tRNA-queuosine biosynthesis. Its function is as follows. Catalyzes the base-exchange of a guanine (G) residue with the queuine precursor 7-aminomethyl-7-deazaguanine (PreQ1) at position 34 (anticodon wobble position) in tRNAs with GU(N) anticodons (tRNA-Asp, -Asn, -His and -Tyr). Catalysis occurs through a double-displacement mechanism. The nucleophile active site attacks the C1' of nucleotide 34 to detach the guanine base from the RNA, forming a covalent enzyme-RNA intermediate. The proton acceptor active site deprotonates the incoming PreQ1, allowing a nucleophilic attack on the C1' of the ribose to form the product. After dissociation, two additional enzymatic reactions on the tRNA convert PreQ1 to queuine (Q), resulting in the hypermodified nucleoside queuosine (7-(((4,5-cis-dihydroxy-2-cyclopenten-1-yl)amino)methyl)-7-deazaguanosine). The chain is Queuine tRNA-ribosyltransferase from Solibacter usitatus (strain Ellin6076).